Here is a 244-residue protein sequence, read N- to C-terminus: Cobalt transport protein CbiM (244 aa).

The signal sequence occupies residues 1–20; it reads MRKITFIAALLSLLPRYALA. A run of 6 helical transmembrane segments spans residues 31–51, 63–83, 95–115, 117–137, 161–181, and 201–221; these read KWCL…LIYI, ILLG…LPSV, LGAI…VLLF, ALLL…SMAV, VFLG…LQLA, and IFAV…VIVL.

Belongs to the CbiM family. Forms an energy-coupling factor (ECF) transporter complex composed of an ATP-binding protein (A component, CbiO), a transmembrane protein (T component, CbiQ) and 2 possible substrate-capture proteins (S components, CbiM and CbiN) of unknown stoichimetry.

It localises to the cell membrane. Its pathway is cofactor biosynthesis; adenosylcobalamin biosynthesis. Functionally, part of the energy-coupling factor (ECF) transporter complex CbiMNOQ involved in cobalt import. In Thermosediminibacter oceani (strain ATCC BAA-1034 / DSM 16646 / JW/IW-1228P), this protein is Cobalt transport protein CbiM.